Reading from the N-terminus, the 72-residue chain is Aurein-2.2 (72 aa).

Residues 1 to 22 form the signal peptide; that stretch reads MAFLKKSLFLVLFLGLVSLSIC. Positions 23-49 are excised as a propeptide; that stretch reads EKEKRQNEEDEDENEAANHEEGSEEKR. The disordered stretch occupies residues 27-47; it reads RQNEEDEDENEAANHEEGSEE. The segment covering 38–47 has biased composition (basic and acidic residues); that stretch reads AANHEEGSEE. Leu-65 bears the Leucine amide mark. Positions 69–72 are excised as a propeptide; that stretch reads NDLE.

Amidation is essential for antibacterial activity against Gram-positive bacteria. In terms of tissue distribution, expressed by the skin dorsal glands.

It is found in the secreted. It localises to the target cell membrane. Functionally, amphipathic alpha-helical antimicrobial peptide with weak to moderate activity against Gram-positive bacteria, and no activity against Gram-negative bacteria. Probably acts by disturbing membrane functions with its amphipathic structure. Strongly inhibits the formation of NO by neuronal nitric oxide synthase (nNOS) at micromolar concentrations. Acts by a non-competitive mechanism, probably by binding to calcium/calmodulin and as a consequence blocking calmodulin attachment to nNOS. The protein is Aurein-2.2 of Ranoidea aurea (Green and golden bell frog).